The primary structure comprises 280 residues: MLSNFEQLIFVGGVPRSGTTLMRAILDAHPDVRCGGETMLLPSFLTWQAGWRTDWVNNSGITQEVFDDAVSAFITEIIAKHGELAPRLCNKDPYTALWLPTIQRLYPNSKFILMIRDARAVIHSMIERKVPVAGYNTSDEQSMFVKWNQEIRKMLFQCNNAPGQCIKVYYERLIQKPEEEIQRITNFLDLQYSQQMLHHHELIGAEVDLNDQEFSASQVKNSINTKALTSWFDCFSEDTLRKLDDVAPFLSVLGYDTSSSKPDYSMFADDDFYQFRNFYS.

16-20 contacts 3'-phosphoadenylyl sulfate; the sequence is RSGTT. A disulfide bridge connects residues Cys34 and Cys89. The Proton donor/acceptor role is filled by Glu37. The N-linked (GlcNAc...) asparagine glycan is linked to Asn57. 3'-phosphoadenylyl sulfate contacts are provided by Arg116, Ser124, and Arg128. An N-linked (GlcNAc...) asparagine glycan is attached at Asn136. Residues Cys158 and Cys165 are joined by a disulfide bond. 3'-phosphoadenylyl sulfate contacts are provided by residues Tyr170 and 215 to 224; that span reads SASQVKNSIN.

The protein belongs to the protein sulfotransferase family.

The enzyme catalyses L-tyrosyl-[protein] + 3'-phosphoadenylyl sulfate = O-sulfo-L-tyrosine-[protein] + adenosine 3',5'-bisphosphate + H(+). Its function is as follows. Catalyzes the O-sulfation of tyrosine residues within acidic motifs of polypeptides, using 3'-phosphoadenylyl sulfate (PAPS) as cosubstrate. The chain is Putative protein-tyrosine sulfotransferase from Caenorhabditis briggsae.